The sequence spans 217 residues: Probable GTP-binding protein EngB (217 aa).

Residues 29–213 (GPLEVAFAGR…RQAIAETVGI (185 aa)) form the EngB-type G domain. Residues 37–44 (GRSNVGKS), 64–68 (GRTQE), 91–94 (DMPG), 158–161 (TKTD), and 192–194 (TSS) each bind GTP. Mg(2+)-binding residues include serine 44 and threonine 66.

The protein belongs to the TRAFAC class TrmE-Era-EngA-EngB-Septin-like GTPase superfamily. EngB GTPase family. Mg(2+) is required as a cofactor.

Functionally, necessary for normal cell division and for the maintenance of normal septation. The chain is Probable GTP-binding protein EngB from Rhizobium johnstonii (strain DSM 114642 / LMG 32736 / 3841) (Rhizobium leguminosarum bv. viciae).